A 334-amino-acid chain; its full sequence is L-lactate dehydrogenase A chain (334 aa).

Residues 30–58 and R100 contribute to the NAD(+) site; that span reads GQVG…LEDK. Residues R107, N139, and R170 each coordinate substrate. N139 is a binding site for NAD(+). The active-site Proton acceptor is the H194. T249 is a binding site for substrate.

Belongs to the LDH/MDH superfamily. LDH family. As to quaternary structure, homotetramer.

Its subcellular location is the cytoplasm. It carries out the reaction (S)-lactate + NAD(+) = pyruvate + NADH + H(+). Its pathway is fermentation; pyruvate fermentation to lactate; (S)-lactate from pyruvate: step 1/1. In terms of biological role, interconverts simultaneously and stereospecifically pyruvate and lactate with concomitant interconversion of NADH and NAD(+). The chain is L-lactate dehydrogenase A chain (ldha) from Xenopus laevis (African clawed frog).